Reading from the N-terminus, the 219-residue chain is Large ribosomal subunit protein bL25 (219 aa).

The disordered stretch occupies residues 193–219; sequence VSSTELEETPEVPASAVPTTDQGESAE. The segment covering 209 to 219 has biased composition (polar residues); the sequence is VPTTDQGESAE.

The protein belongs to the bacterial ribosomal protein bL25 family. CTC subfamily. In terms of assembly, part of the 50S ribosomal subunit; part of the 5S rRNA/L5/L18/L25 subcomplex. Contacts the 5S rRNA. Binds to the 5S rRNA independently of L5 and L18.

In terms of biological role, this is one of the proteins that binds to the 5S RNA in the ribosome where it forms part of the central protuberance. This chain is Large ribosomal subunit protein bL25, found in Legionella pneumophila (strain Corby).